The sequence spans 177 residues: CDP-diacylglycerol--serine O-phosphatidyltransferase (177 aa).

Transmembrane regions (helical) follow at residues 4–24, 28–48, 77–97, 116–136, and 140–160; these read IPCMITIGNFICGLLAIHSLL, IHSAVLFIFTGMFLDFFDGMA, MLAYSVALYTLPFIGILCALT, LPTFIGMPIPFAGMCLVILSF, and PILLAIGTCGLSYLMVSKIKF.

It belongs to the CDP-alcohol phosphatidyltransferase class-I family.

The protein localises to the cell membrane. The enzyme catalyses a CDP-1,2-diacyl-sn-glycerol + L-serine = a 1,2-diacyl-sn-glycero-3-phospho-L-serine + CMP + H(+). This chain is CDP-diacylglycerol--serine O-phosphatidyltransferase (pssA), found in Bacillus subtilis (strain 168).